The chain runs to 110 residues: Large ribosomal subunit protein uL22 (110 aa).

The protein belongs to the universal ribosomal protein uL22 family. Part of the 50S ribosomal subunit.

In terms of biological role, this protein binds specifically to 23S rRNA; its binding is stimulated by other ribosomal proteins, e.g. L4, L17, and L20. It is important during the early stages of 50S assembly. It makes multiple contacts with different domains of the 23S rRNA in the assembled 50S subunit and ribosome. Functionally, the globular domain of the protein is located near the polypeptide exit tunnel on the outside of the subunit, while an extended beta-hairpin is found that lines the wall of the exit tunnel in the center of the 70S ribosome. This chain is Large ribosomal subunit protein uL22, found in Hahella chejuensis (strain KCTC 2396).